A 443-amino-acid chain; its full sequence is Tol-Pal system protein TolB (443 aa).

The N-terminal stretch at 1-33 is a signal peptide; the sequence is MKIGIINTKIRTVFSAFACMIAASLVCTMPARA.

The protein belongs to the TolB family. As to quaternary structure, the Tol-Pal system is composed of five core proteins: the inner membrane proteins TolA, TolQ and TolR, the periplasmic protein TolB and the outer membrane protein Pal. They form a network linking the inner and outer membranes and the peptidoglycan layer.

The protein localises to the periplasm. In terms of biological role, part of the Tol-Pal system, which plays a role in outer membrane invagination during cell division and is important for maintaining outer membrane integrity. This is Tol-Pal system protein TolB from Brucella suis biovar 1 (strain 1330).